A 520-amino-acid chain; its full sequence is GMP synthase [glutamine-hydrolyzing] (520 aa).

The Glutamine amidotransferase type-1 domain occupies Thr9–Asp202. The Nucleophile role is filled by Cys86. Catalysis depends on residues His176 and Glu178. In terms of domain architecture, GMPS ATP-PPase spans Trp203–Arg395. An ATP-binding site is contributed by Ser230–Ser236.

Homodimer.

It catalyses the reaction XMP + L-glutamine + ATP + H2O = GMP + L-glutamate + AMP + diphosphate + 2 H(+). The protein operates within purine metabolism; GMP biosynthesis; GMP from XMP (L-Gln route): step 1/1. Its function is as follows. Catalyzes the synthesis of GMP from XMP. The sequence is that of GMP synthase [glutamine-hydrolyzing] from Sinorhizobium fredii (strain NBRC 101917 / NGR234).